A 330-amino-acid chain; its full sequence is HTH-type transcriptional regulator GanR (330 aa).

Residues 2–57 (ATIKDIAQEAGFSISTVSRVLNNDESLSVPDETREKIYEAAEKLNYRKKTVRPLVK) enclose the HTH lacI-type domain. The H-T-H motif DNA-binding region spans 4–23 (IKDIAQEAGFSISTVSRVLN).

Its function is as follows. Negatively regulates the expression of the ganSPQAB operon. Inhibits transcription of the operon by binding to an operator in the promoter region. In the presence of galactobiose, GanR dissociates from the promoter, resulting in the expression of the gan operon. The polypeptide is HTH-type transcriptional regulator GanR (Bacillus subtilis (strain 168)).